The following is a 435-amino-acid chain: Galactose/lactose metabolism regulatory protein GAL80 (435 aa).

Met1 is modified (N-acetylmethionine).

This sequence to K.lactis GAL80. In terms of assembly, monomer.

Its function is as follows. This protein is a negative regulator for the gene expression of the lactose/galactose metabolic genes. It binds to GAL4 and so blocks transcriptional activation by it, in the absence of an inducing sugar. The sequence is that of Galactose/lactose metabolism regulatory protein GAL80 (GAL80) from Saccharomyces cerevisiae (strain ATCC 204508 / S288c) (Baker's yeast).